Consider the following 93-residue polypeptide: Small ribosomal subunit protein uS19 (93 aa).

The protein belongs to the universal ribosomal protein uS19 family.

Protein S19 forms a complex with S13 that binds strongly to the 16S ribosomal RNA. In Mycobacterium leprae (strain TN), this protein is Small ribosomal subunit protein uS19 (rpsS).